We begin with the raw amino-acid sequence, 221 residues long: MRAGQPKITGAKITGAIIAGGQSSRMQAGGVSGDKFLQPLGSAPVIAHVIARLQPQVDTLFINSKGDLSRFAAFGLPAVKDIAMNHGGPLVGLLTCLAHASPCRLLLTSAADTPFLPCDLASNLIRKQAETGARIILACSNERVHPIVGLWHTDLVPDLEKWLQHAEKASIFWFAKHIGFEVVNIPLAHAPRLAESYDPFFNINLPDDLLKAREINEALQA.

GTP contacts are provided by residues 18-20 (IAG), K35, N63, D81, and D112. D112 lines the Mg(2+) pocket.

It belongs to the MobA family. As to quaternary structure, monomer. Mg(2+) serves as cofactor.

It localises to the cytoplasm. It carries out the reaction Mo-molybdopterin + GTP + H(+) = Mo-molybdopterin guanine dinucleotide + diphosphate. Functionally, transfers a GMP moiety from GTP to Mo-molybdopterin (Mo-MPT) cofactor (Moco or molybdenum cofactor) to form Mo-molybdopterin guanine dinucleotide (Mo-MGD) cofactor. The protein is Molybdenum cofactor guanylyltransferase of Brucella abortus (strain S19).